The sequence spans 189 residues: Putative lipoprotein LppK (189 aa).

An N-terminal signal peptide occupies residues 1–22 (MRRNIRVTLGAATIVAALGLSG). Residue C23 is the site of N-palmitoyl cysteine attachment. C23 is lipidated: S-diacylglycerol cysteine. Disordered regions lie at residues 26 to 49 (PEFKRSSPPAPSLPPVTSSPLEAA) and 166 to 189 (MGNSPDSTPSATSPAPAPSPTPPG). A compositionally biased stretch (low complexity) spans 169–179 (SPDSTPSATSP). A compositionally biased stretch (pro residues) spans 180-189 (APAPSPTPPG).

It belongs to the MTB12 family.

It is found in the cell membrane. In Mycobacterium tuberculosis (strain CDC 1551 / Oshkosh), this protein is Putative lipoprotein LppK (lppK).